We begin with the raw amino-acid sequence, 1136 residues long: MPTAAAAATASLRVSNIPPSAVAAELLAFFDSAVAVAGGAFACEIAAAHRGWLSRGHGTVQFGSAAAAAAAAGLASSGRLPRFLGALLSVSPSPVDLLPRASDLSLRAAGAGLVVGDRVAERVFEAADAWDGVRAEVIPGKRRVDLYLEHDSQRYKLEVLFEDMKDCLGCTLDGMGAILLQLNYAPRIHTAISGPAVNSRFMDDRFHACKEDAKFSWVRALDFTPNYSFGRCSTLVLKLGKSALVSDILKSLPFSGNLGELTMNSMDGVGASSNVVPLVHCPRDYSVPYEVLFRLNSLMHMGKIVAKHVNADLFKALQELPVDVSRRIFEKMHKLESTCYGPLQFIQQEAYSMKRSHNVLLSNEGEGEGERKLMKCYRVNITPSKIFCFGPEEEVTNYVVKHHSAYASDFVRVTFVDEDWSKLSSNAISARIEQGFFSKPFKTGLYYRILSILKKGFSIGPKNFEFLAFSASQLRGNSVWMFASNASLNAGGIRRWMGHFENIRSVSKCAARMGQLFSSSRQTFEVLRWDVEVIPDIEITTDGSKYIFSDGIGKISLRFAKRVAHHVGLDPTNLPSAFQIRYGGYKGVIAIDPMSSIDLSLRPSMKKFESESRMLNITSWSKSQPCYVNREIISLLSTLGIRDEIFVAMQQDEMRETEEMLTNKEVALSVLGKLGGSETKTAVKMLLQGYEPSSEPYLSMILKAHQENRLTDIRTRCKIHVPKGRVLIGCLDETGVLEYGQVYIRITKNSKEQKDSNQSYFYNDDGKTATVVGKVAITKNPCLHPGDIRVLEAIYDPDLVGMVDCLVFPQRGERPHPNECSGGDLDGDLYFITWDDKLIPEKVDTPMDYTATRPRIMDHVVTLEEIQKHFVDYMINDSLGAISTAHLIHADRSPLKARSPECLQLATLHSMAVDFAKTGAPAEMPRTLRPREYPDFMERWEKPMYISNGVLGKLYRSAMGHMEKSGDSGALSSSSAQPSPTYDPDLEVPGSDEFLQAAEEYYELYEEKLTTLMNYYRAELEDEILTGNIRNKMLYLKRDNKRYFEMKDRIVAAVDALHREARGWLLSSRKEEDASRMASAWYRVTYHPDRRRGKRFWSFPWIACDNLLAIKASSQLRRRRQKDDDSTAVVQMDCSA.

Residues 965–989 are disordered; that stretch reads SGDSGALSSSSAQPSPTYDPDLEVP. Over residues 967–980 the composition is skewed to low complexity; it reads DSGALSSSSAQPSP.

Belongs to the RdRP family.

It catalyses the reaction RNA(n) + a ribonucleoside 5'-triphosphate = RNA(n+1) + diphosphate. In terms of biological role, probably involved in the RNA silencing pathway and required for the generation of small interfering RNAs (siRNAs). The protein is Probable RNA-dependent RNA polymerase 2 (RDR2) of Oryza sativa subsp. japonica (Rice).